Here is a 1485-residue protein sequence, read N- to C-terminus: Putative E3 ubiquitin-protein ligase LIN-1 (1485 aa).

A compositionally biased stretch (acidic residues) spans 337–353 (EENEDDSDSELENESVD). Disordered stretches follow at residues 337–363 (EENE…IFSP) and 384–417 (NQIP…KRDS). The U-box domain maps to 510-585 (KPPKDFVCPI…TSWKEQNPEL (76 aa)). WD repeat units lie at residues 1204 to 1241 (SSNG…PRVI), 1246 to 1283 (EHTK…IKCI), 1409 to 1448 (SLST…RVAS), and 1454 to 1485 (GHTK…WALD).

Expressed in roots and nodules, and at very low levels in calli and seedling shoots.

It catalyses the reaction S-ubiquitinyl-[E2 ubiquitin-conjugating enzyme]-L-cysteine + [acceptor protein]-L-lysine = [E2 ubiquitin-conjugating enzyme]-L-cysteine + N(6)-ubiquitinyl-[acceptor protein]-L-lysine.. The protein operates within protein modification; protein ubiquitination. Functionally, putative E3 ubiquitin-protein ligase involved in the rhizobial infection process. Plays an important role in the early steps of infection thread formation and in growth and differentiation of nodules. The protein is Putative E3 ubiquitin-protein ligase LIN-1 of Lotus japonicus (Lotus corniculatus var. japonicus).